A 275-amino-acid polypeptide reads, in one-letter code: Dermonecrotic toxin LruSicTox-alphaIV1 (275 aa).

The active site involves His-5. Mg(2+)-binding residues include Glu-25 and Asp-27. His-41 acts as the Nucleophile in catalysis. 2 disulfide bridges follow: Cys-45/Cys-51 and Cys-47/Cys-192. Mg(2+) is bound at residue Asp-85.

This sequence belongs to the arthropod phospholipase D family. Class II subfamily. Mg(2+) is required as a cofactor. As to expression, expressed by the venom gland.

The protein localises to the secreted. It carries out the reaction an N-(acyl)-sphingosylphosphocholine = an N-(acyl)-sphingosyl-1,3-cyclic phosphate + choline. The enzyme catalyses an N-(acyl)-sphingosylphosphoethanolamine = an N-(acyl)-sphingosyl-1,3-cyclic phosphate + ethanolamine. The catalysed reaction is a 1-acyl-sn-glycero-3-phosphocholine = a 1-acyl-sn-glycero-2,3-cyclic phosphate + choline. It catalyses the reaction a 1-acyl-sn-glycero-3-phosphoethanolamine = a 1-acyl-sn-glycero-2,3-cyclic phosphate + ethanolamine. In terms of biological role, dermonecrotic toxins cleave the phosphodiester linkage between the phosphate and headgroup of certain phospholipids (sphingolipid and lysolipid substrates), forming an alcohol (often choline) and a cyclic phosphate. This toxin acts on sphingomyelin (SM). It may also act on ceramide phosphoethanolamine (CPE), lysophosphatidylcholine (LPC) and lysophosphatidylethanolamine (LPE), but not on lysophosphatidylserine (LPS), and lysophosphatidylglycerol (LPG). It acts by transphosphatidylation, releasing exclusively cyclic phosphate products as second products. Induces dermonecrosis, hemolysis, increased vascular permeability, edema, inflammatory response, and platelet aggregation. The polypeptide is Dermonecrotic toxin LruSicTox-alphaIV1 (Loxosceles rufescens (Mediterranean recluse spider)).